Here is a 265-residue protein sequence, read N- to C-terminus: MKSIFFSLSLLLLLEKKAAGIELYAGGTKGHFLVKTSPLMFIGKNQFLYGHKEEQEEAPEESIFVQTKHHEYGQDADADMGGALSSQELTSLKEDIVCEEEDELAQQKSQLPSQSQIKSQTQVKSYAAQLKSQPGQLKTIGQVKSQTMLKSHGAPLKSFKARLNLREDIPQQVKGRGYGLAEDLAQVRQQPAKVHRLKGKHRQSRKTAAFYPQFRRRSRPYPRYFVQFQEQLQGSVHHTKSFYPGPGMCYCPRGGVILYQDAFTD.

The first 20 residues, 1–20 (MKSIFFSLSLLLLLEKKAAG), serve as a signal peptide directing secretion. Repeat copies occupy residues 116–119 (QIKS), 122–125 (QVKS), 129–132 (QLKS), 136–139 (QLKT), and 142–145 (QVKS). The tract at residues 116 to 145 (QIKSQTQVKSYAAQLKSQPGQLKTIGQVKS) is 5 X 4 AA tandem repeats of Q-X-K-[ST].

Glycosylated. Post-translationally, covalently cross-linked by transglutaminase, which is important for the formation of the gelatinous copulatory plug. Five repeats of Q-X-K-(S/T) in the central region of the protein serve as the transglutaminase substrate site(s). Highly expressed in the seminal vesicle where it is detected in luminal epithelium of the mucosa folds, and also in luminal fluid (at protein level). Not detected in other tissues tested.

It localises to the secreted. Functionally, component of the copulatory plug. This chain is Seminal vesicle secretory protein 3A, found in Mus musculus (Mouse).